Here is a 160-residue protein sequence, read N- to C-terminus: uncharacterized protein (160 aa).

Residues 7–151 (LLINYKTLEE…NPLIWHPDMD (145 aa)) enclose the N-acetyltransferase domain.

This is an uncharacterized protein from Bacillus subtilis (strain 168).